A 175-amino-acid chain; its full sequence is Crossover junction endodeoxyribonuclease RuvC (175 aa).

Active-site residues include aspartate 16, glutamate 76, and aspartate 148. 3 residues coordinate Mg(2+): aspartate 16, glutamate 76, and aspartate 148.

Belongs to the RuvC family. Homodimer which binds Holliday junction (HJ) DNA. The HJ becomes 2-fold symmetrical on binding to RuvC with unstacked arms; it has a different conformation from HJ DNA in complex with RuvA. In the full resolvosome a probable DNA-RuvA(4)-RuvB(12)-RuvC(2) complex forms which resolves the HJ. It depends on Mg(2+) as a cofactor.

Its subcellular location is the cytoplasm. The catalysed reaction is Endonucleolytic cleavage at a junction such as a reciprocal single-stranded crossover between two homologous DNA duplexes (Holliday junction).. The RuvA-RuvB-RuvC complex processes Holliday junction (HJ) DNA during genetic recombination and DNA repair. Endonuclease that resolves HJ intermediates. Cleaves cruciform DNA by making single-stranded nicks across the HJ at symmetrical positions within the homologous arms, yielding a 5'-phosphate and a 3'-hydroxyl group; requires a central core of homology in the junction. The consensus cleavage sequence is 5'-(A/T)TT(C/G)-3'. Cleavage occurs on the 3'-side of the TT dinucleotide at the point of strand exchange. HJ branch migration catalyzed by RuvA-RuvB allows RuvC to scan DNA until it finds its consensus sequence, where it cleaves and resolves the cruciform DNA. In Bradyrhizobium diazoefficiens (strain JCM 10833 / BCRC 13528 / IAM 13628 / NBRC 14792 / USDA 110), this protein is Crossover junction endodeoxyribonuclease RuvC.